Here is a 66-residue protein sequence, read N- to C-terminus: Kappa-flavitoxin (66 aa).

5 cysteine pairs are disulfide-bonded: cysteine 3–cysteine 21, cysteine 14–cysteine 42, cysteine 27–cysteine 31, cysteine 46–cysteine 58, and cysteine 59–cysteine 64.

The protein belongs to the three-finger toxin family. Long-chain subfamily. Kappa-neurotoxin sub-subfamily. As to quaternary structure, homo- and heterodimer; non-covalently linked. Expressed by the venom gland.

The protein resides in the secreted. In terms of biological role, postsynaptic neurotoxin that binds and inhibits neuronal nicotinic acetylcholine receptors (nAChR) with high affinity (IC(50)&lt;100 nM). Is a selective, and slowly reversible antagonist of alpha-3/CHRNA3-containing and some alpha-4/CHRNA4-containing AChRs. In Bungarus flaviceps flaviceps (Red-headed krait), this protein is Kappa-flavitoxin.